A 116-amino-acid polypeptide reads, in one-letter code: Prefoldin subunit beta (116 aa).

This sequence belongs to the prefoldin subunit beta family. In terms of assembly, heterohexamer of two alpha and four beta subunits.

Its subcellular location is the cytoplasm. Molecular chaperone capable of stabilizing a range of proteins. Seems to fulfill an ATP-independent, HSP70-like function in archaeal de novo protein folding. This is Prefoldin subunit beta from Methanobrevibacter smithii (strain ATCC 35061 / DSM 861 / OCM 144 / PS).